Consider the following 126-residue polypeptide: UPF0332 protein glr0978 (126 aa).

It belongs to the UPF0332 family.

This chain is UPF0332 protein glr0978, found in Gloeobacter violaceus (strain ATCC 29082 / PCC 7421).